The primary structure comprises 360 residues: Popeye domain-containing protein 1 (360 aa).

The Extracellular portion of the chain corresponds to 1–48 (MNYTESSPLRESTAIGFTPELESIIPVPSNKTTCENWREIHHLVFHVA). N-linked (GlcNAc...) asparagine glycans are attached at residues Asn-2 and Asn-30. A helical transmembrane segment spans residues 49-69 (NICFAVGLVIPTTLHLHMIFL). Arg-70 is a topological domain (cytoplasmic). Residues 71–91 (GMLTLGCTLYIVWATLYRCAL) form a helical membrane-spanning segment. A topological domain (extracellular) is located at residue Asp-92. A helical transmembrane segment spans residues 93 to 113 (IMIWNSVFLGVNILHLSYLLY). The tract at residues 93–115 (IMIWNSVFLGVNILHLSYLLYKK) is required for interaction with CAV3. Over 114 to 360 (KKRPVKIEKE…PNTLKVHQLP (247 aa)) the chain is Cytoplasmic. A required for interaction with KCNK2 region spans residues 136–186 (RVPPDLFRRLTGQFCMIQTLKKGQTYAAEDKTSVDDRLSILLKGKMKVSYR). Residues Ser-295 and Ser-318 each carry the phosphoserine modification. The interval 317 to 360 (SSLHVSSPHQRASAKMKPIEEGAEDDDDVFEPASPNTLKVHQLP) is disordered. The span at 337-346 (EGAEDDDDVF) shows a compositional bias: acidic residues. Over residues 350–360 (SPNTLKVHQLP) the composition is skewed to polar residues.

The protein belongs to the popeye family. In terms of assembly, homodimer. Homodimerization requires the C-terminus cytoplasmic region. Interacts (via the C-terminus cytoplasmic tail) with TJP1. Interacts (via the C-terminus cytoplasmic tail) with ARHGEF25/GEFT (via the DH domain). Interacts (via the C-terminus cytoplasmic tail) with VAMP3. Interacts with KCNK2; the interaction enhances KCNK2 surface expression and is inhibited by cAMP. Interacts with CAV3. As to expression, expressed in epithelial cells (at protein level). Expressed in fetal and adult heart and skeletal muscle.

It localises to the lateral cell membrane. The protein resides in the cell junction. The protein localises to the tight junction. It is found in the membrane. Its subcellular location is the cell membrane. It localises to the sarcolemma. The protein resides in the caveola. Its function is as follows. Cell adhesion molecule involved in the establishment and/or maintenance of cell integrity. Involved in the formation and regulation of the tight junction (TJ) paracellular permeability barrier in epithelial cells. Plays a role in VAMP3-mediated vesicular transport and recycling of different receptor molecules through its interaction with VAMP3. Plays a role in the regulation of cell shape and movement by modulating the Rho-family GTPase activity through its interaction with ARHGEF25/GEFT. Induces primordial adhesive contact and aggregation of epithelial cells in a Ca(2+)-independent manner. Also involved in striated muscle regeneration and repair and in the regulation of cell spreading. Important for the maintenance of cardiac function. Plays a regulatory function in heart rate dynamics mediated, at least in part, through cAMP-binding and, probably, by increasing cell surface expression of the potassium channel KCNK2 and enhancing current density. Is also a caveolae-associated protein important for the preservation of caveolae structural and functional integrity as well as for heart protection against ischemia injury. The protein is Popeye domain-containing protein 1 of Homo sapiens (Human).